We begin with the raw amino-acid sequence, 417 residues long: NADH-quinone oxidoreductase subunit D (417 aa).

Belongs to the complex I 49 kDa subunit family. As to quaternary structure, NDH-1 is composed of 14 different subunits. Subunits NuoB, C, D, E, F, and G constitute the peripheral sector of the complex.

The protein localises to the cell inner membrane. It catalyses the reaction a quinone + NADH + 5 H(+)(in) = a quinol + NAD(+) + 4 H(+)(out). Functionally, NDH-1 shuttles electrons from NADH, via FMN and iron-sulfur (Fe-S) centers, to quinones in the respiratory chain. The immediate electron acceptor for the enzyme in this species is believed to be ubiquinone. Couples the redox reaction to proton translocation (for every two electrons transferred, four hydrogen ions are translocated across the cytoplasmic membrane), and thus conserves the redox energy in a proton gradient. The protein is NADH-quinone oxidoreductase subunit D of Burkholderia thailandensis (strain ATCC 700388 / DSM 13276 / CCUG 48851 / CIP 106301 / E264).